A 1183-amino-acid polypeptide reads, in one-letter code: ATP-dependent helicase/nuclease subunit A (1183 aa).

The UvrD-like helicase ATP-binding domain occupies 3–461; that stretch reads VQWTDEQQRA…IDLTKNFRSR (459 aa). 24 to 31 provides a ligand contact to ATP; sequence AAAGSGKT. The UvrD-like helicase C-terminal domain maps to 473–769; it reads RQVMDEAVGE…RIMTIHQSKG (297 aa).

It belongs to the helicase family. AddA subfamily. In terms of assembly, heterodimer of AddA and AddB/RexB. Mg(2+) is required as a cofactor.

It carries out the reaction Couples ATP hydrolysis with the unwinding of duplex DNA by translocating in the 3'-5' direction.. It catalyses the reaction ATP + H2O = ADP + phosphate + H(+). Functionally, the heterodimer acts as both an ATP-dependent DNA helicase and an ATP-dependent, dual-direction single-stranded exonuclease. Recognizes the chi site generating a DNA molecule suitable for the initiation of homologous recombination. The AddA nuclease domain is required for chi fragment generation; this subunit has the helicase and 3' -&gt; 5' nuclease activities. In Exiguobacterium sibiricum (strain DSM 17290 / CCUG 55495 / CIP 109462 / JCM 13490 / 255-15), this protein is ATP-dependent helicase/nuclease subunit A.